A 460-amino-acid chain; its full sequence is A-type ATP synthase subunit B (460 aa).

The protein belongs to the ATPase alpha/beta chains family. In terms of assembly, has multiple subunits, A(3), B(3), C, D, E, F, G, I and K(x); there may be a few other subunits as well.

It is found in the cell membrane. Functionally, component of the A-type ATP synthase that produces ATP from ADP in the presence of a proton gradient across the membrane. The B chain is a regulatory subunit. The polypeptide is A-type ATP synthase subunit B (Methanosarcina mazei (strain ATCC BAA-159 / DSM 3647 / Goe1 / Go1 / JCM 11833 / OCM 88) (Methanosarcina frisia)).